The primary structure comprises 501 residues: Probable cytosol aminopeptidase (501 aa).

2 residues coordinate Mn(2+): K268 and D273. The active site involves K280. Positions 291, 350, and 352 each coordinate Mn(2+). The active site involves R354.

The protein belongs to the peptidase M17 family. Mn(2+) serves as cofactor.

It is found in the cytoplasm. It carries out the reaction Release of an N-terminal amino acid, Xaa-|-Yaa-, in which Xaa is preferably Leu, but may be other amino acids including Pro although not Arg or Lys, and Yaa may be Pro. Amino acid amides and methyl esters are also readily hydrolyzed, but rates on arylamides are exceedingly low.. The enzyme catalyses Release of an N-terminal amino acid, preferentially leucine, but not glutamic or aspartic acids.. Its function is as follows. Presumably involved in the processing and regular turnover of intracellular proteins. Catalyzes the removal of unsubstituted N-terminal amino acids from various peptides. The chain is Probable cytosol aminopeptidase from Nitrosococcus oceani (strain ATCC 19707 / BCRC 17464 / JCM 30415 / NCIMB 11848 / C-107).